The sequence spans 436 residues: 3-ketoacyl-CoA thiolase (436 aa).

Cysteine 99 (acyl-thioester intermediate) is an active-site residue. Catalysis depends on proton acceptor residues histidine 392 and cysteine 422.

The protein belongs to the thiolase-like superfamily. Thiolase family. In terms of assembly, heterotetramer of two alpha chains (FadJ) and two beta chains (FadI).

It localises to the cytoplasm. The enzyme catalyses an acyl-CoA + acetyl-CoA = a 3-oxoacyl-CoA + CoA. It functions in the pathway lipid metabolism; fatty acid beta-oxidation. Its function is as follows. Catalyzes the final step of fatty acid oxidation in which acetyl-CoA is released and the CoA ester of a fatty acid two carbons shorter is formed. The polypeptide is 3-ketoacyl-CoA thiolase (Pseudoalteromonas atlantica (strain T6c / ATCC BAA-1087)).